We begin with the raw amino-acid sequence, 252 residues long: Tabinhibitin 9 (252 aa).

Residues 1-23 (MTSNLYYVLISPYSLAYMVQYRS) form the signal peptide. A Cell attachment site motif is present at residues 32-34 (RGD). The SCP domain occupies 63–207 (YIRSTMCEIM…KARAFFTCNF (145 aa)).

It belongs to the CRISP family. As to expression, expressed in salivary glands.

It is found in the secreted. Its function is as follows. Inhibits platelet aggregation induced by all agonists tested (ADP, arachidonic acid, the thromboxane A2 analog U46619, thrombin, and snake venom snaclecs (TMVA that activates platelet through GPIB, and stejnulxin that specifically acts through GPVI (GP6))). May act by competing with fibrinogen for binding to glycoprotein IIb/IIIa (ITGA2B/ITGB3). This Tabanus yao (Horsefly) protein is Tabinhibitin 9.